Reading from the N-terminus, the 651-residue chain is Sodium/potassium/calcium exchanger 2 (651 aa).

At 1 to 38 the chain is on the cytoplasmic side; the sequence is MALCKKTVGSVLEEWCLNEPLFGCKRHQNVRKKLRLIR. A helical transmembrane segment spans residues 39–59; that stretch reads IIGLLVSVVAISTFSLSISAF. Topologically, residues 60-134 are extracellular; the sequence is FKMETHSTVL…DLFSLEERRK (75 aa). Residues 92–123 are disordered; sequence QNEGSTPDSPTSMKHEAEHDNATEEHSKGEYP. Residues 93 to 103 are compositionally biased toward polar residues; sequence NEGSTPDSPTS. Basic and acidic residues predominate over residues 104-122; it reads MKHEAEHDNATEEHSKGEY. An N-linked (GlcNAc...) asparagine glycan is attached at Asn-112. Residues 135–155 traverse the membrane as a helical segment; the sequence is GAVILHVIGMIYMFIALAIVC. Over 156–179 the chain is Cytoplasmic; the sequence is DEFFVPSLTVITEKLSISDDVAGA. One copy of the Alpha-1 repeat lies at 176-216; it reads VAGATFMAAGGSAPELFTSLIGVFISHSNVGIGTIVGSAVF. The helical transmembrane segment at 180–200 threads the bilayer; it reads TFMAAGGSAPELFTSLIGVFI. Residues 201 to 206 lie on the Extracellular side of the membrane; it reads SHSNVG. The helical transmembrane segment at 207–227 threads the bilayer; the sequence is IGTIVGSAVFNILFVIGMCAL. At 228–245 the chain is on the cytoplasmic side; sequence FSREILNLTWWPLFRDVS. Residues 246 to 266 form a helical membrane-spanning segment; it reads FYIVDLILLIIFFLDNLIMWW. Residues 267 to 459 are Extracellular-facing; the sequence is ESLTLLTAYF…SLAWPDTPRK (193 aa). The span at 304 to 322 shows a compositional bias: basic and acidic residues; it reads ATTGDAEGKSPTAGDKDDQ. The segment at 304-338 is disordered; it reads ATTGDAEGKSPTAGDKDDQTLTTKPRLQRGGSSAS. Residues 323 to 338 show a composition bias toward polar residues; that stretch reads TLTTKPRLQRGGSSAS. The chain crosses the membrane as a helical span at residues 460–480; that stretch reads QLTYLLVLPIVFPLWVSLPDV. The Cytoplasmic portion of the chain corresponds to 481-487; the sequence is RNPRSRK. The helical transmembrane segment at 488–508 threads the bilayer; it reads FFPITFFGSISWIAFFSYLMV. Over 509–523 the chain is Extracellular; it reads WWAHQVGETIGISEE. A helical transmembrane segment spans residues 524–544; it reads IMGLTILAAGTSIPDLITSVI. One copy of the Alpha-2 repeat lies at 531–562; it reads AAGTSIPDLITSVIVARKGLGDMAVSSSVGSN. Over 545-562 the chain is Cytoplasmic; sequence VARKGLGDMAVSSSVGSN. The helical transmembrane segment at 563–583 threads the bilayer; that stretch reads IFDITVGLPLPWLLYAVINNF. Residues 584–592 are Extracellular-facing; the sequence is SPVTVSSNG. A helical transmembrane segment spans residues 593 to 613; it reads LFCAIVLLFIMLLFVILSIAF. Over 614–620 the chain is Cytoplasmic; the sequence is CKWRMNK. A helical transmembrane segment spans residues 621–641; sequence FLGFLMFGLYFVFLIVSVLLE. The Extracellular segment spans residues 642-651; sequence DKVIQCPVSI.

It belongs to the Ca(2+):cation antiporter (CaCA) (TC 2.A.19) family. SLC24A subfamily. In terms of tissue distribution, retinal cones. Found in the cone inner segment layer and in a subpopulation of ganglion cells.

It localises to the cell membrane. The enzyme catalyses Ca(2+)(out) + K(+)(out) + 4 Na(+)(in) = Ca(2+)(in) + K(+)(in) + 4 Na(+)(out). In terms of biological role, calcium, potassium:sodium antiporter that transports 1 Ca(2+) and 1 K(+) in exchange for 4 Na(+). Required for learming and memory by regulating neuronal Ca(2+), which is essential for the development of synaptic plasticity. The sequence is that of Sodium/potassium/calcium exchanger 2 (SLC24A2) from Gallus gallus (Chicken).